The following is an 84-amino-acid chain: Small ribosomal subunit protein uS17 (84 aa).

The protein belongs to the universal ribosomal protein uS17 family. Part of the 30S ribosomal subunit.

Functionally, one of the primary rRNA binding proteins, it binds specifically to the 5'-end of 16S ribosomal RNA. The polypeptide is Small ribosomal subunit protein uS17 (Vibrio vulnificus (strain CMCP6)).